Here is a 466-residue protein sequence, read N- to C-terminus: UDP-glycosyltransferase 79 (466 aa).

His27 functions as the Proton acceptor in the catalytic mechanism. UDP-alpha-D-glucose is bound at residue His27. Catalysis depends on Asp120, which acts as the Charge relay. Residues Ser142, Thr291, Phe343, Cys344, His361, Trp364, Asn365, Ser366, Glu369, Asp385, and Gln386 each coordinate UDP-alpha-D-glucose. Thr291, Phe343, Cys344, and His361 together coordinate UDP. Asn365, Ser366, and Glu369 together coordinate UDP.

Belongs to the UDP-glycosyltransferase family.

Its function is as follows. Involved in the detoxification of the Fusarium mycotoxin deoxynivalenol by the transfer of glucose from UDP-D-glucose to the hydroxyl group at C-3, forming deoxynivalenol-3-O-beta-D-glucoside. This chain is UDP-glycosyltransferase 79, found in Oryza sativa subsp. japonica (Rice).